The primary structure comprises 148 residues: Protein GLUTAMINE DUMPER 3 (148 aa).

The disordered stretch occupies residues 1–24 (MEGRQYYPPRENVEGNRTTMGGGP). Residues 1–34 (MEGRQYYPPRENVEGNRTTMGGGPHSPWHSPVPY) lie on the Extracellular side of the membrane. The helical transmembrane segment at 35 to 55 (LFGGLAAMLGLIAFALLILAC) threads the bilayer. Residues 56–148 (SYWRLSGYLD…RSSESNGETH (93 aa)) lie on the Cytoplasmic side of the membrane. Positions 99-103 (VIMAG) match the VIMAG motif. Residues 120–132 (CDDDDDEDDDVEG) show a composition bias toward acidic residues. Positions 120 to 148 (CDDDDDEDDDVEGSDQVVPRSSESNGETH) are disordered. Over residues 138–148 (PRSSESNGETH) the composition is skewed to polar residues.

It belongs to the GLUTAMINE DUMPER 1 (TC 9.B.60) family. In terms of tissue distribution, expressed in the vascular tissues. Also detected in anthers.

It is found in the membrane. Functionally, probable subunit of an amino acid transporter involved in the regulation of the amino acid metabolism. Stimulates amino acid export by activating nonselective amino acid facilitators. Acts upstream genes involved in the salicylic acid (SA) pathway and in the geminivirus-host interaction. This chain is Protein GLUTAMINE DUMPER 3 (GDU3), found in Arabidopsis thaliana (Mouse-ear cress).